Consider the following 322-residue polypeptide: Ribose-phosphate pyrophosphokinase 1 (322 aa).

ATP-binding positions include 39–41 (DGE) and 98–99 (RQ). Residues histidine 132 and aspartate 173 each coordinate Mg(2+). Lysine 196 is a catalytic residue. Residues arginine 198, aspartate 224, and 228 to 232 (DTAGT) each bind D-ribose 5-phosphate.

This sequence belongs to the ribose-phosphate pyrophosphokinase family. Class I subfamily. As to quaternary structure, homohexamer. Mg(2+) is required as a cofactor.

The protein resides in the cytoplasm. It carries out the reaction D-ribose 5-phosphate + ATP = 5-phospho-alpha-D-ribose 1-diphosphate + AMP + H(+). The protein operates within metabolic intermediate biosynthesis; 5-phospho-alpha-D-ribose 1-diphosphate biosynthesis; 5-phospho-alpha-D-ribose 1-diphosphate from D-ribose 5-phosphate (route I): step 1/1. Its function is as follows. Involved in the biosynthesis of the central metabolite phospho-alpha-D-ribosyl-1-pyrophosphate (PRPP) via the transfer of pyrophosphoryl group from ATP to 1-hydroxyl of ribose-5-phosphate (Rib-5-P). The chain is Ribose-phosphate pyrophosphokinase 1 from Streptococcus mutans serotype c (strain ATCC 700610 / UA159).